Consider the following 214-residue polypeptide: N-(5'-phosphoribosyl)anthranilate isomerase (214 aa).

Belongs to the TrpF family.

The enzyme catalyses N-(5-phospho-beta-D-ribosyl)anthranilate = 1-(2-carboxyphenylamino)-1-deoxy-D-ribulose 5-phosphate. The protein operates within amino-acid biosynthesis; L-tryptophan biosynthesis; L-tryptophan from chorismate: step 3/5. This is N-(5'-phosphoribosyl)anthranilate isomerase from Haloarcula marismortui (strain ATCC 43049 / DSM 3752 / JCM 8966 / VKM B-1809) (Halobacterium marismortui).